The sequence spans 62 residues: Large ribosomal subunit protein eL24 (62 aa).

Zn(2+)-binding residues include Cys-6, Cys-9, Cys-32, and Cys-36. The segment at 6–36 (CSFCEGTIEPGCGKKYVKKDGSVMHFCSSKC) adopts a C4-type zinc-finger fold.

This sequence belongs to the eukaryotic ribosomal protein eL24 family. As to quaternary structure, part of the 50S ribosomal subunit. Forms a cluster with proteins L3 and L14. Requires Zn(2+) as cofactor.

Binds to the 23S rRNA. This chain is Large ribosomal subunit protein eL24, found in Methanococcus maripaludis (strain C7 / ATCC BAA-1331).